A 350-amino-acid polypeptide reads, in one-letter code: tRNA N6-adenosine threonylcarbamoyltransferase (350 aa).

2 residues coordinate Fe cation: histidine 117 and histidine 121. Residues 140 to 144 (LVSGG), aspartate 173, glycine 186, and asparagine 277 contribute to the substrate site. A Fe cation-binding site is contributed by aspartate 305.

It belongs to the KAE1 / TsaD family. Fe(2+) serves as cofactor.

It is found in the cytoplasm. It carries out the reaction L-threonylcarbamoyladenylate + adenosine(37) in tRNA = N(6)-L-threonylcarbamoyladenosine(37) in tRNA + AMP + H(+). Required for the formation of a threonylcarbamoyl group on adenosine at position 37 (t(6)A37) in tRNAs that read codons beginning with adenine. Is involved in the transfer of the threonylcarbamoyl moiety of threonylcarbamoyl-AMP (TC-AMP) to the N6 group of A37, together with TsaE and TsaB. TsaD likely plays a direct catalytic role in this reaction. The polypeptide is tRNA N6-adenosine threonylcarbamoyltransferase (Novosphingobium aromaticivorans (strain ATCC 700278 / DSM 12444 / CCUG 56034 / CIP 105152 / NBRC 16084 / F199)).